A 247-amino-acid chain; its full sequence is Uridylate kinase (247 aa).

18–21 contributes to the ATP binding site; that stretch reads KLSG. Gly-60 provides a ligand contact to UMP. ATP is bound by residues Gly-61 and Arg-65. Residues Asp-80 and 141–148 contribute to the UMP site; that span reads TGNPFFTT. Thr-168, Tyr-174, and Asp-177 together coordinate ATP.

The protein belongs to the UMP kinase family. Homohexamer.

It localises to the cytoplasm. The catalysed reaction is UMP + ATP = UDP + ADP. It functions in the pathway pyrimidine metabolism; CTP biosynthesis via de novo pathway; UDP from UMP (UMPK route): step 1/1. Its activity is regulated as follows. Inhibited by UTP. Catalyzes the reversible phosphorylation of UMP to UDP. The protein is Uridylate kinase of Pseudomonas savastanoi pv. phaseolicola (strain 1448A / Race 6) (Pseudomonas syringae pv. phaseolicola (strain 1448A / Race 6)).